An 829-amino-acid chain; its full sequence is DNA ligase (829 aa).

NAD(+)-binding positions include D38–D42, S87–L88, and E127. K129 serves as the catalytic N6-AMP-lysine intermediate. 4 residues coordinate NAD(+): R150, E187, K305, and K329. Positions 455, 458, 473, and 479 each coordinate Zn(2+). The disordered stretch occupies residues E534–K564. Positions G752 to C829 constitute a BRCT domain.

This sequence belongs to the NAD-dependent DNA ligase family. LigA subfamily. Requires Mg(2+) as cofactor. Mn(2+) is required as a cofactor.

It catalyses the reaction NAD(+) + (deoxyribonucleotide)n-3'-hydroxyl + 5'-phospho-(deoxyribonucleotide)m = (deoxyribonucleotide)n+m + AMP + beta-nicotinamide D-nucleotide.. Its function is as follows. DNA ligase that catalyzes the formation of phosphodiester linkages between 5'-phosphoryl and 3'-hydroxyl groups in double-stranded DNA using NAD as a coenzyme and as the energy source for the reaction. It is essential for DNA replication and repair of damaged DNA. This Neisseria gonorrhoeae (strain ATCC 700825 / FA 1090) protein is DNA ligase.